Reading from the N-terminus, the 357-residue chain is MEQKQRRFTKNIFVLDANAKTLCGRIAKLSSQPYCQIKIGRVIAFKPVKNPEPKGYVLNVPGPGAYRIQDGQDIISLMLTPHGVEATTERWEEWKFEGVSVTPMATRVQHNGVMVDAEIKYCKGMGIVQPYMRNDFDRNEMPDLPGVMRSNYDIRELRQKIKNERESAPRLQVQSVAPREESRWMDDDEAKVDEEAREMIPGTSRLEKLREARSNVFKEVAAGINWNLDEKDEEDGDEREDEERVKTLSDDDEQGEDASDDEHPKTHITKEYVEKVAKQIKLKDERFMSLSSAMPQASGGFDRMIVTKKLKWQNVPLYCFDESSKRYELQCVGACERVAFVSKDMSLIILRSAFRRL.

Disordered regions lie at residues 163 to 199 and 228 to 267; these read NERE…AREM and LDEK…PKTH. Acidic residues-rich tracts occupy residues 230–241 and 250–260; these read EKDEEDGDERED and DDDEQGEDASD.

This sequence belongs to the orbivirus non-structural protein NS2 family.

Single-stranded RNA-binding protein. This Antilocapra americana (Pronghorn) protein is Non-structural protein NS2 (Segment-8).